The primary structure comprises 369 residues: Peptide chain release factor 2 (369 aa).

Position 251 is an N5-methylglutamine (Gln-251).

It belongs to the prokaryotic/mitochondrial release factor family. In terms of processing, methylated by PrmC. Methylation increases the termination efficiency of RF2.

Its subcellular location is the cytoplasm. Functionally, peptide chain release factor 2 directs the termination of translation in response to the peptide chain termination codons UGA and UAA. This is Peptide chain release factor 2 from Acidothermus cellulolyticus (strain ATCC 43068 / DSM 8971 / 11B).